A 62-amino-acid chain; its full sequence is Weak neurotoxin 5 (62 aa).

5 cysteine pairs are disulfide-bonded: Cys-3-Cys-24, Cys-6-Cys-11, Cys-17-Cys-40, Cys-44-Cys-54, and Cys-55-Cys-60.

The protein belongs to the three-finger toxin family. Ancestral subfamily. Orphan group II sub-subfamily. Expressed by the venom gland.

The protein localises to the secreted. Its function is as follows. Binds with low affinity to muscular (alpha-1-beta-1-delta-epsilon/CHRNA1-CHRNB1-CHRND-CHRNE) and very low affinity to neuronal (alpha-7/CHRNA7) nicotinic acetylcholine receptor (nAChR). The polypeptide is Weak neurotoxin 5 (Naja naja (Indian cobra)).